The sequence spans 790 residues: Cadherin-18 (790 aa).

The first 24 residues, 1–24, serve as a signal peptide directing secretion; it reads MKITSTSCICPVLVCLCFVQRCYG. The propeptide occupies 25 to 53; that stretch reads TTHHGSIRGTRNQTKHIEGETEVHHRPKR. N36 carries an N-linked (GlcNAc...) asparagine glycan. Cadherin domains are found at residues 54-159, 160-268, 269-383, 384-486, and 487-608; these read GWVW…APKF, TDGP…PPRF, PQKH…PPLF, SMPS…DNPP, and ELAR…FLSS. At 54–608 the chain is on the extracellular side; sequence GWVWNQFFVL…TCHAEAFLSS (555 aa). N-linked (GlcNAc...) asparagine glycosylation occurs at N255. N-linked (GlcNAc...) asparagine glycans are attached at residues N455 and N536. A helical membrane pass occupies residues 609–636; that stretch reads AGLSTGALIAILLCVVILLAIVVLFITL. Residues 637–790 are Cytoplasmic-facing; sequence RRSKKEPLII…YGEIESERTT (154 aa). S786 carries the phosphoserine modification.

The protein localises to the cell membrane. In terms of biological role, cadherins are calcium-dependent cell adhesion proteins. They preferentially interact with themselves in a homophilic manner in connecting cells; cadherins may thus contribute to the sorting of heterogeneous cell types. In Bos taurus (Bovine), this protein is Cadherin-18 (CDH18).